The primary structure comprises 397 residues: DNA-directed RNA polymerase subunit Rpo1C (397 aa).

The protein belongs to the RNA polymerase beta' chain family. Part of the RNA polymerase complex.

The protein localises to the cytoplasm. The catalysed reaction is RNA(n) + a ribonucleoside 5'-triphosphate = RNA(n+1) + diphosphate. In terms of biological role, DNA-dependent RNA polymerase (RNAP) catalyzes the transcription of DNA into RNA using the four ribonucleoside triphosphates as substrates. Forms part of the jaw domain. The protein is DNA-directed RNA polymerase subunit Rpo1C of Methanosarcina acetivorans (strain ATCC 35395 / DSM 2834 / JCM 12185 / C2A).